A 490-amino-acid chain; its full sequence is Probable glycine dehydrogenase (decarboxylating) subunit 2 (490 aa).

Lysine 273 bears the N6-(pyridoxal phosphate)lysine mark.

Belongs to the GcvP family. C-terminal subunit subfamily. As to quaternary structure, the glycine cleavage system is composed of four proteins: P, T, L and H. In this organism, the P 'protein' is a heterodimer of two subunits. Requires pyridoxal 5'-phosphate as cofactor.

The catalysed reaction is N(6)-[(R)-lipoyl]-L-lysyl-[glycine-cleavage complex H protein] + glycine + H(+) = N(6)-[(R)-S(8)-aminomethyldihydrolipoyl]-L-lysyl-[glycine-cleavage complex H protein] + CO2. Its function is as follows. The glycine cleavage system catalyzes the degradation of glycine. The P protein binds the alpha-amino group of glycine through its pyridoxal phosphate cofactor; CO(2) is released and the remaining methylamine moiety is then transferred to the lipoamide cofactor of the H protein. The chain is Probable glycine dehydrogenase (decarboxylating) subunit 2 from Staphylococcus aureus (strain MSSA476).